Reading from the N-terminus, the 351-residue chain is Methylthioribose-1-phosphate isomerase (351 aa).

Substrate contacts are provided by residues Arg51–Ala53, Arg94, and Gln199. Asp240 acts as the Proton donor in catalysis. Substrate is bound at residue Asn250–Lys251.

Belongs to the EIF-2B alpha/beta/delta subunits family. MtnA subfamily. As to quaternary structure, homodimer.

The catalysed reaction is 5-(methylsulfanyl)-alpha-D-ribose 1-phosphate = 5-(methylsulfanyl)-D-ribulose 1-phosphate. It participates in amino-acid biosynthesis; L-methionine biosynthesis via salvage pathway; L-methionine from S-methyl-5-thio-alpha-D-ribose 1-phosphate: step 1/6. Catalyzes the interconversion of methylthioribose-1-phosphate (MTR-1-P) into methylthioribulose-1-phosphate (MTRu-1-P). The sequence is that of Methylthioribose-1-phosphate isomerase from Bacillus anthracis.